The sequence spans 415 residues: uncharacterized protein (415 aa).

[4Fe-4S] cluster is bound by residues cysteine 85, cysteine 91, cysteine 94, and cysteine 175. 4 residues coordinate S-adenosyl-L-methionine: glutamine 248, tyrosine 276, glutamate 297, and asparagine 344. The active-site Nucleophile is cysteine 371.

It belongs to the class I-like SAM-binding methyltransferase superfamily. RNA M5U methyltransferase family.

This is an uncharacterized protein from Leptospira interrogans serogroup Icterohaemorrhagiae serovar Lai (strain 56601).